A 308-amino-acid polypeptide reads, in one-letter code: tRNA dimethylallyltransferase (308 aa).

ATP is bound at residue 14–21 (GPTASGKT). Substrate is bound at residue 16-21 (TASGKT). Interaction with substrate tRNA stretches follow at residues 39-42 (DSAL), 163-167 (QRLAR), and 244-249 (RCVGYR).

Belongs to the IPP transferase family. In terms of assembly, monomer. Mg(2+) is required as a cofactor.

It carries out the reaction adenosine(37) in tRNA + dimethylallyl diphosphate = N(6)-dimethylallyladenosine(37) in tRNA + diphosphate. Functionally, catalyzes the transfer of a dimethylallyl group onto the adenine at position 37 in tRNAs that read codons beginning with uridine, leading to the formation of N6-(dimethylallyl)adenosine (i(6)A). The sequence is that of tRNA dimethylallyltransferase from Shewanella halifaxensis (strain HAW-EB4).